The primary structure comprises 59 residues: UPF0391 membrane protein lpp2589 (59 aa).

2 helical membrane-spanning segments follow: residues alanine 5–valine 25 and isoleucine 30–leucine 50.

It belongs to the UPF0391 family.

It is found in the cell membrane. This is UPF0391 membrane protein lpp2589 from Legionella pneumophila (strain Paris).